We begin with the raw amino-acid sequence, 1470 residues long: ABC transporter G family member 48 (1470 aa).

Residues 1 to 47 (MAAAPSASGRRSMSWGSSISQSFRQAEADDPFGRAASQQGHDDDEEN) form a disordered region. Residues 9 to 24 (GRRSMSWGSSISQSFR) show a composition bias toward polar residues. Residues 172–445 (GLIGRFGSSN…FENAGFRCPE (274 aa)) enclose the ABC transporter 1 domain. 205–212 (GPPSSGKS) contributes to the ATP binding site. Residues 523 to 736 (ESLRAVMSRE…SQQAISINEF (214 aa)) form the ABC transmembrane type-2 1 domain. A run of 6 helical transmembrane segments spans residues 541–561 (FIYI…MTVF), 577–597 (FLGA…AELQ), 629–649 (VPVS…VMGF), 660–680 (FIAF…LGAI), 686–706 (VANT…GFLI), and 772–792 (FWIS…LYIL). The disordered stretch occupies residues 828 to 852 (QIVHNNGASNTSATSSIPMSGSRST). The span at 832–843 (NNGASNTSATSS) shows a compositional bias: low complexity. Positions 869-1121 (LCFNHVNYYV…KLVEYFEAVP (253 aa)) constitute an ABC transporter 2 domain. 914–921 (GVSGAGKT) contacts ATP. An ABC transmembrane type-2 2 domain is found at 1194-1408 (SQCIANFWKQ…TIYGVVASQF (215 aa)). Transmembrane regions (helical) follow at residues 1215-1234 (AMRY…VFWQ), 1249-1271 (LGAT…QPVV), 1301-1321 (VIYN…MIGY), 1331-1351 (FMFF…MLVA), 1359-1379 (ANIL…FLVV), 1389-1409 (WYYW…SQFG), and 1439-1459 (FLGY…FIFG).

Belongs to the ABC transporter superfamily. ABCG family. PDR (TC 3.A.1.205) subfamily.

Its subcellular location is the membrane. Functionally, may be a general defense protein. This is ABC transporter G family member 48 from Oryza sativa subsp. japonica (Rice).